Reading from the N-terminus, the 497-residue chain is ADP-dependent glucokinase (497 aa).

Residues 1-22 form the signal peptide; that stretch reads MALWRGSAYAGFLALAVGCVFL. The region spanning 52–497 is the ADPK domain; it reads SPEGRLAAAW…LFYSEVHPHL (446 aa). Mg(2+)-binding residues include Glu297, Glu328, and Asp481. Asp481 functions as the Proton acceptor in the catalytic mechanism.

The protein belongs to the ADP-dependent glucokinase family. In terms of assembly, monomer. Mg(2+) serves as cofactor.

Its subcellular location is the secreted. The catalysed reaction is D-glucose + ADP = D-glucose 6-phosphate + AMP + H(+). It functions in the pathway carbohydrate degradation; glycolysis. Catalyzes the phosphorylation of D-glucose to D-glucose 6-phosphate using ADP as the phosphate donor. GDP and CDP can replace ADP, but with reduced efficiency. The chain is ADP-dependent glucokinase (ADPGK) from Bos taurus (Bovine).